Reading from the N-terminus, the 450-residue chain is Dol-P-Glc:Glc(2)Man(9)GlcNAc(2)-PP-Dol alpha-1,2-glucosyltransferase (450 aa).

The helical transmembrane segment at 12–32 threads the bilayer; the sequence is ISIISKYVAIVIFLIFVIIMF. N-linked (GlcNAc...) asparagine glycosylation occurs at Asn-34. 4 helical membrane-spanning segments follow: residues 158–178, 190–210, 243–263, and 273–293; these read YFLF…LGLI, ALVG…IAFI, LLGY…NGGI, and IELH…FTIP. N-linked (GlcNAc...) asparagine glycosylation occurs at Asn-297. 4 helical membrane-spanning segments follow: residues 312–332, 357–377, 384–404, and 429–449; these read IILN…FTIV, LKPL…SSLI, FIGI…SPLF, and FIWL…KGII.

It belongs to the ALG10 glucosyltransferase family.

The protein localises to the endoplasmic reticulum membrane. It catalyses the reaction an alpha-D-Glc-(1-&gt;3)-alpha-D-Glc-(1-&gt;3)-alpha-D-Man-(1-&gt;2)-alpha-D-Man-(1-&gt;2)-alpha-D-Man-(1-&gt;3)-[alpha-D-Man-(1-&gt;2)-alpha-D-Man-(1-&gt;3)-[alpha-D-Man-(1-&gt;2)-alpha-D-Man-(1-&gt;6)]-alpha-D-Man-(1-&gt;6)]-beta-D-Man-(1-&gt;4)-beta-D-GlcNAc-(1-&gt;4)-alpha-D-GlcNAc-diphospho-di-trans,poly-cis-dolichol + a di-trans,poly-cis-dolichyl beta-D-glucosyl phosphate = a alpha-D-Glc-(1-&gt;2)-alpha-D-Glc-(1-&gt;3)-alpha-D-Glc-(1-&gt;3)-alpha-D-Man-(1-&gt;2)-alpha-D-Man-(1-&gt;2)-alpha-D-Man-(1-&gt;3)-[alpha-D-Man-(1-&gt;2)-alpha-D-Man-(1-&gt;3)-[alpha-D-Man-(1-&gt;2)-alpha-D-Man-(1-&gt;6)]-alpha-D-Man-(1-&gt;6)]-beta-D-Man-(1-&gt;4)-beta-D-GlcNAc-(1-&gt;4)-alpha-D-GlcNAc-diphospho-di-trans,poly-cis-dolichol + a di-trans,poly-cis-dolichyl phosphate + H(+). It functions in the pathway protein modification; protein glycosylation. Dol-P-Glc:Glc(2)Man(9)GlcNAc(2)-PP-Dol alpha-1,2-glucosyltransferase that operates in the biosynthetic pathway of dolichol-linked oligosaccharides, the glycan precursors employed in protein asparagine (N)-glycosylation. The assembly of dolichol-linked oligosaccharides begins on the cytosolic side of the endoplasmic reticulum membrane and finishes in its lumen. The sequential addition of sugars to dolichol pyrophosphate produces dolichol-linked oligosaccharides containing fourteen sugars, including two GlcNAcs, nine mannoses and three glucoses. Once assembled, the oligosaccharide is transferred from the lipid to nascent proteins by oligosaccharyltransferases. In the lumen of the endoplasmic reticulum, adds the third and last glucose residue from dolichyl phosphate glucose (Dol-P-Glc) onto the lipid-linked oligosaccharide intermediate Glc(2)Man(9)GlcNAc(2)-PP-Dol to produce Glc(3)Man(9)GlcNAc(2)-PP-Dol. This Candida albicans (strain SC5314 / ATCC MYA-2876) (Yeast) protein is Dol-P-Glc:Glc(2)Man(9)GlcNAc(2)-PP-Dol alpha-1,2-glucosyltransferase (DIE2).